The primary structure comprises 208 residues: Thiamine-phosphate synthase (208 aa).

4-amino-2-methyl-5-(diphosphooxymethyl)pyrimidine-binding positions include 38 to 42 and Asn70; that span reads QYRSK. Mg(2+)-binding residues include Asp71 and Asp90. Thr109 lines the 4-amino-2-methyl-5-(diphosphooxymethyl)pyrimidine pocket. 136-138 provides a ligand contact to 2-[(2R,5Z)-2-carboxy-4-methylthiazol-5(2H)-ylidene]ethyl phosphate; sequence SAT. Lys139 contacts 4-amino-2-methyl-5-(diphosphooxymethyl)pyrimidine. Residues Gly166 and 186–187 contribute to the 2-[(2R,5Z)-2-carboxy-4-methylthiazol-5(2H)-ylidene]ethyl phosphate site; that span reads VS.

This sequence belongs to the thiamine-phosphate synthase family. Mg(2+) is required as a cofactor.

The catalysed reaction is 2-[(2R,5Z)-2-carboxy-4-methylthiazol-5(2H)-ylidene]ethyl phosphate + 4-amino-2-methyl-5-(diphosphooxymethyl)pyrimidine + 2 H(+) = thiamine phosphate + CO2 + diphosphate. The enzyme catalyses 2-(2-carboxy-4-methylthiazol-5-yl)ethyl phosphate + 4-amino-2-methyl-5-(diphosphooxymethyl)pyrimidine + 2 H(+) = thiamine phosphate + CO2 + diphosphate. It catalyses the reaction 4-methyl-5-(2-phosphooxyethyl)-thiazole + 4-amino-2-methyl-5-(diphosphooxymethyl)pyrimidine + H(+) = thiamine phosphate + diphosphate. It participates in cofactor biosynthesis; thiamine diphosphate biosynthesis; thiamine phosphate from 4-amino-2-methyl-5-diphosphomethylpyrimidine and 4-methyl-5-(2-phosphoethyl)-thiazole: step 1/1. Condenses 4-methyl-5-(beta-hydroxyethyl)thiazole monophosphate (THZ-P) and 2-methyl-4-amino-5-hydroxymethyl pyrimidine pyrophosphate (HMP-PP) to form thiamine monophosphate (TMP). The polypeptide is Thiamine-phosphate synthase (Aromatoleum aromaticum (strain DSM 19018 / LMG 30748 / EbN1) (Azoarcus sp. (strain EbN1))).